Consider the following 292-residue polypeptide: Phosphatidylserine decarboxylase proenzyme (292 aa).

Active-site charge relay system; for autoendoproteolytic cleavage activity residues include aspartate 89, histidine 146, and serine 252. The Schiff-base intermediate with substrate; via pyruvic acid; for decarboxylase activity role is filled by serine 252. Residue serine 252 is modified to Pyruvic acid (Ser); by autocatalysis.

The protein belongs to the phosphatidylserine decarboxylase family. PSD-B subfamily. Prokaryotic type I sub-subfamily. Heterodimer of a large membrane-associated beta subunit and a small pyruvoyl-containing alpha subunit. It depends on pyruvate as a cofactor. Is synthesized initially as an inactive proenzyme. Formation of the active enzyme involves a self-maturation process in which the active site pyruvoyl group is generated from an internal serine residue via an autocatalytic post-translational modification. Two non-identical subunits are generated from the proenzyme in this reaction, and the pyruvate is formed at the N-terminus of the alpha chain, which is derived from the carboxyl end of the proenzyme. The autoendoproteolytic cleavage occurs by a canonical serine protease mechanism, in which the side chain hydroxyl group of the serine supplies its oxygen atom to form the C-terminus of the beta chain, while the remainder of the serine residue undergoes an oxidative deamination to produce ammonia and the pyruvoyl prosthetic group on the alpha chain. During this reaction, the Ser that is part of the protease active site of the proenzyme becomes the pyruvoyl prosthetic group, which constitutes an essential element of the active site of the mature decarboxylase.

Its subcellular location is the cell membrane. It catalyses the reaction a 1,2-diacyl-sn-glycero-3-phospho-L-serine + H(+) = a 1,2-diacyl-sn-glycero-3-phosphoethanolamine + CO2. It participates in phospholipid metabolism; phosphatidylethanolamine biosynthesis; phosphatidylethanolamine from CDP-diacylglycerol: step 2/2. In terms of biological role, catalyzes the formation of phosphatidylethanolamine (PtdEtn) from phosphatidylserine (PtdSer). In Shewanella baltica (strain OS185), this protein is Phosphatidylserine decarboxylase proenzyme.